A 106-amino-acid chain; its full sequence is MTDKAGDWQEHGPQVEEAPPQVKRPPLFKVIILNDDYTPMDFVVEVLQKFFHMDRARATQVMLHVHTRGEGVCGVFSRDVAETKVNQVNDWSRQHEHPLMCTLKEA.

A compositionally biased stretch (basic and acidic residues) spans 1–14; sequence MTDKAGDWQEHGPQ. A disordered region spans residues 1-21; it reads MTDKAGDWQEHGPQVEEAPPQ.

It belongs to the ClpS family. In terms of assembly, binds to the N-terminal domain of the chaperone ClpA.

Functionally, involved in the modulation of the specificity of the ClpAP-mediated ATP-dependent protein degradation. The polypeptide is ATP-dependent Clp protease adapter protein ClpS (Alkalilimnicola ehrlichii (strain ATCC BAA-1101 / DSM 17681 / MLHE-1)).